Reading from the N-terminus, the 1941-residue chain is Xin actin-binding repeat-containing protein 1 (1941 aa).

The tract at residues 1 to 41 (MAEPQKSSKVAIKKMEDDLPPPPIPDSIQVIAPASQDPNPL) is disordered. Xin repeat units lie at residues 108–123 (GEVQSMRWIFENWALD), 143–158 (GDVKSTSLRFENQSVN), 176–191 (GDVHTARWLFETQPLD), 215–230 (GDVKGAKELFEAQSLD), 255–270 (GDVKKTIRLFQTEPLC), 293–308 (NAVRTARWLFETQPLD), 331–346 (PDVSGARWIFETQPLD), 368–383 (ADVTKQRLLFGTQALD), 402–417 (GDVKSTLWLFETQPME), 439–454 (GDVKQRKHVFETCPLG), 475–490 (GDVKSFKTLFETLPLD), 510–525 (GNVKANQILFETTPLY), 548–563 (GDVKKYKWMFETRPLD), 586–601 (GDVRTAKWLFETQPMD), 624–639 (GDVKTCRWLFETQPMH), 658–673 (ADVKSYTWMFETQPLD), 697–712 (VDVKTVRHLFETEPLG), 736–751 (GEVSRVKEFFEAKPLD), 769–784 (GSVHKFTWLFENYPMD), 805–820 (GDVGGKRFIFETYSLD), 842–857 (ANVKSCTMLFESQPLY), 880–895 (GDVKGARWLFETKPLD), 917–932 (GDVQAARWRFETEPLD), 951–966 (GDVQSNKQLFESQQVG), 982–997 (GDVRTSTWLFENQPVD), 1020–1035 (GDVKRCTWLFETQPMD), and 1055–1070 (ADVKSTTWLFESTPLD). Residues 1514-1565 (ASKQETKTLQSTIHQQESASTMRENTSTAIRTSTTRVQEASRTHTSVSQKSI) are compositionally biased toward polar residues. Disordered regions lie at residues 1514–1568 (ASKQ…IASH), 1715–1856 (ASGS…PPPA), and 1914–1941 (YKARKGGQGKFELDRAKPSKPVKNGEVG). Over residues 1820–1833 (SASTNNSTNRSTKS) the composition is skewed to low complexity. Residues 1834 to 1843 (VPPPVPPKPP) show a composition bias toward pro residues.

Belongs to the Xin family. Expressed at intercalated disks in the heart (at protein level).

The protein resides in the cell junction. It is found in the adherens junction. The protein localises to the desmosome. Its function is as follows. Involved in cardiac morphogenesis, including heart midline formation, cardiac tubule looping, myocardial formation and maintenance of heart beat speed and rhythm. May protect actin filaments from depolymerization. May play a role in development of normal skeletal muscle morphology, muscle fiber type composition and regulation of muscle satellite cell activation and survival. The polypeptide is Xin actin-binding repeat-containing protein 1 (Gallus gallus (Chicken)).